The sequence spans 325 residues: Tagatose 1,6-diphosphate aldolase 1 (325 aa).

Belongs to the aldolase LacD family.

It catalyses the reaction D-tagatofuranose 1,6-bisphosphate = D-glyceraldehyde 3-phosphate + dihydroxyacetone phosphate. The protein operates within carbohydrate metabolism; D-tagatose 6-phosphate degradation; D-glyceraldehyde 3-phosphate and glycerone phosphate from D-tagatose 6-phosphate: step 2/2. The sequence is that of Tagatose 1,6-diphosphate aldolase 1 (lacD1) from Streptococcus pyogenes serotype M3 (strain SSI-1).